A 286-amino-acid polypeptide reads, in one-letter code: Thiamine-monophosphate kinase (286 aa).

Mg(2+)-binding residues include aspartate 22, serine 36, threonine 37, and aspartate 38. Aspartate 45 serves as a coordination point for substrate. Residues aspartate 66 and aspartate 111 each contribute to the Mg(2+) site. Residues 110-111 (GD) and arginine 136 contribute to the ATP site. Residue aspartate 191 participates in Mg(2+) binding. ATP is bound at residue serine 193. Aspartate 194 is a Mg(2+) binding site. Tyrosine 282 provides a ligand contact to substrate.

The protein belongs to the thiamine-monophosphate kinase family.

The enzyme catalyses thiamine phosphate + ATP = thiamine diphosphate + ADP. Its pathway is cofactor biosynthesis; thiamine diphosphate biosynthesis; thiamine diphosphate from thiamine phosphate: step 1/1. Functionally, catalyzes the ATP-dependent phosphorylation of thiamine-monophosphate (TMP) to form thiamine-pyrophosphate (TPP), the active form of vitamin B1. The chain is Thiamine-monophosphate kinase from Methanospirillum hungatei JF-1 (strain ATCC 27890 / DSM 864 / NBRC 100397 / JF-1).